The sequence spans 187 residues: Small ribosomal subunit protein uS5 (187 aa).

Residues 20–83 enclose the S5 DRBM domain; it reads FADRLVAINR…EQAKRQMIRV (64 aa). The disordered stretch occupies residues 155–187; it reads KKEQSPRSVAQRRGKKVADILPKRDEAPAEAEA. The segment covering 170–181 has biased composition (basic and acidic residues); it reads KVADILPKRDEA.

It belongs to the universal ribosomal protein uS5 family. Part of the 30S ribosomal subunit. Contacts proteins S4 and S8.

In terms of biological role, with S4 and S12 plays an important role in translational accuracy. Its function is as follows. Located at the back of the 30S subunit body where it stabilizes the conformation of the head with respect to the body. This is Small ribosomal subunit protein uS5 from Ruegeria sp. (strain TM1040) (Silicibacter sp.).